A 225-amino-acid polypeptide reads, in one-letter code: PKHD-type hydroxylase YbiX (225 aa).

Positions 78–177 (TLSTPLFNRY…RVASFMWIQS (100 aa)) constitute a Fe2OG dioxygenase domain. Fe cation is bound by residues His-96, Asp-98, and His-158. Arg-168 contacts 2-oxoglutarate.

It depends on Fe(2+) as a cofactor. The cofactor is L-ascorbate.

In Escherichia coli O17:K52:H18 (strain UMN026 / ExPEC), this protein is PKHD-type hydroxylase YbiX.